A 304-amino-acid chain; its full sequence is Recombination-associated protein RdgC (304 aa).

The protein belongs to the RdgC family.

It localises to the cytoplasm. The protein localises to the nucleoid. Its function is as follows. May be involved in recombination. The chain is Recombination-associated protein RdgC from Shewanella sp. (strain W3-18-1).